The primary structure comprises 278 residues: Anamorsin homolog (278 aa).

Positions 1 to 147 (MESVSHLVSN…EIGSSAALPF (147 aa)) are N-terminal SAM-like domain. Residues 147–191 (FANKISLGGNSKMETAKMWTLSSQDFVDDDIDIIDENTLIEEDDF) form a linker region. Residues C204, C214, C217, and C219 each contribute to the [2Fe-2S] cluster site. The segment at 204–219 (CDSAKKKRKACKNCSC) is fe-S binding site A. Residues C239, C242, C250, and C253 each contribute to the [4Fe-4S] cluster site. 2 short sequence motifs (cx2C motif) span residues 239–242 (CGSC) and 250–253 (CSSC). Residues 239-253 (CGSCYLGDAFRCSSC) form a fe-S binding site B region.

The protein belongs to the anamorsin family. Monomer. The cofactor is [2Fe-2S] cluster. It depends on [4Fe-4S] cluster as a cofactor.

Its subcellular location is the cytoplasm. It localises to the mitochondrion intermembrane space. In terms of biological role, component of the cytosolic iron-sulfur (Fe-S) protein assembly (CIA) machinery. Required for the maturation of extramitochondrial Fe-S proteins. Part of an electron transfer chain functioning in an early step of cytosolic Fe-S biogenesis, facilitating the de novo assembly of a [4Fe-4S] cluster on the cytosolic Fe-S scaffold complex. Electrons are transferred from NADPH via a FAD- and FMN-containing diflavin oxidoreductase. Together with the diflavin oxidoreductase, also required for the assembly of the diferric tyrosyl radical cofactor of ribonucleotide reductase (RNR), probably by providing electrons for reduction during radical cofactor maturation in the catalytic small subunit. In Trichoplax adhaerens (Trichoplax reptans), this protein is Anamorsin homolog.